The chain runs to 775 residues: ATP-dependent 6-phosphofructokinase 2 (775 aa).

The tract at residues 1–390 (MTNTILDTYS…YHSAYRHLNT (390 aa)) is N-terminal catalytic PFK domain 1. ATP-binding positions include G25, 88–89 (RC), and 118–121 (GDGS). D119 is a binding site for Mg(2+). Substrate-binding positions include 164–166 (SID), R201, 208–210 (MGR), E264, R292, and 298–301 (HIQR). D166 (proton acceptor) is an active-site residue. The tract at residues 391-404 (SDHPKMVLPEDKRM) is interdomain linker. Residues 405 to 775 (RVAIIHVGAP…GRSSLYAIPN (371 aa)) are C-terminal regulatory PFK domain 2. Residues 537–541 (SMSNN), 582–584 (QGA), D640, and 672–675 (HFQQ) each bind beta-D-fructose 2,6-bisphosphate.

This sequence belongs to the phosphofructokinase type A (PFKA) family. ATP-dependent PFK group I subfamily. Eukaryotic two domain clade 'E' sub-subfamily. In terms of assembly, homotetramer. Mg(2+) serves as cofactor.

The protein resides in the cytoplasm. The enzyme catalyses beta-D-fructose 6-phosphate + ATP = beta-D-fructose 1,6-bisphosphate + ADP + H(+). It functions in the pathway carbohydrate degradation; glycolysis; D-glyceraldehyde 3-phosphate and glycerone phosphate from D-glucose: step 3/4. With respect to regulation, allosterically activated by ADP, AMP, or fructose 2,6-bisphosphate, and allosterically inhibited by ATP or citrate. Functionally, catalyzes the phosphorylation of D-fructose 6-phosphate to fructose 1,6-bisphosphate by ATP, the first committing step of glycolysis. In Aspergillus oryzae (strain ATCC 42149 / RIB 40) (Yellow koji mold), this protein is ATP-dependent 6-phosphofructokinase 2 (pfkB).